The primary structure comprises 319 residues: Ferrochelatase (319 aa).

Residues His-193 and Glu-274 each coordinate Fe cation.

Belongs to the ferrochelatase family.

Its subcellular location is the cytoplasm. The catalysed reaction is heme b + 2 H(+) = protoporphyrin IX + Fe(2+). It functions in the pathway porphyrin-containing compound metabolism; protoheme biosynthesis; protoheme from protoporphyrin-IX: step 1/1. Functionally, catalyzes the ferrous insertion into protoporphyrin IX. The sequence is that of Ferrochelatase from Actinobacillus pleuropneumoniae serotype 7 (strain AP76).